The chain runs to 56 residues: Preprotein translocase subunit SecG (56 aa).

Topologically, residues 1–29 (MAKDKTTLPPTGAGLMRFFDEDTRAIKVS) are cytoplasmic. A helical transmembrane segment spans residues 30–51 (PKGVIAIVLVLIAFEVFLHLFG). Over 52–56 (PSIFG) the chain is Extracellular.

This sequence belongs to the SEC61-beta family. In terms of assembly, component of the protein translocase complex. Heterotrimer consisting of alpha (SecY), beta (SecG) and gamma (SecE) subunits. Can form oligomers of the heterotrimer.

The protein localises to the cell membrane. Its function is as follows. Involved in protein export. The function of the beta subunit is unknown, but it may be involved in stabilization of the trimeric complex. The sequence is that of Preprotein translocase subunit SecG from Thermococcus gammatolerans (strain DSM 15229 / JCM 11827 / EJ3).